A 1921-amino-acid chain; its full sequence is Endoribonuclease Dicer (1921 aa).

The Helicase ATP-binding domain occupies 51–227 (LLEAALDHNT…ELEEKIKKLE (177 aa)). Residue 64–71 (LNTGSGKT) participates in ATP binding. A DECH box motif is present at residues 175–178 (DECH). Residues 409 to 433 (YVSWSDSEDDDEDEEIEEKEKPETN) form a disordered region. Residues 414-425 (DSEDDDEDEEIE) show a composition bias toward acidic residues. The Helicase C-terminal domain maps to 433-602 (NFPSPFTNIL…SVDTSETETE (170 aa)). The Dicer dsRNA-binding fold domain maps to 630 to 722 (AIGHINRYCA…MPVGKETVKY (93 aa)). The tract at residues 727 to 746 (DLHDEEETSVPGRPGSTKRR) is disordered. The region spanning 895–1042 (KFMEDIEKSE…LVPELCAIHP (148 aa)) is the PAZ domain. The segment at 1270–1289 (NLSKDKVDSEKNTSSGYSSK) is disordered. 2 consecutive RNase III domains span residues 1277–1404 (DSEK…EETT) and 1665–1823 (FENF…MDSG). Residues Glu-1317, Asp-1396, Glu-1399, and Glu-1704 each coordinate Mg(2+). Residues 1782-1801 (QGMDSELRRSEEDEEKEEDI) form a disordered region. Asp-1809 and Glu-1812 together coordinate Mg(2+). Residues 1848–1913 (VPRSPVRELL…ARRALRSLKA (66 aa)) form the DRBM domain.

This sequence belongs to the helicase family. Dicer subfamily. In terms of assembly, component of the RISC loading complex (RLC), or micro-RNA (miRNA) loading complex (miRLC), which is composed of DICER1, AGO2 and TARBP2; DICER1 and TARBP2 are required to process precursor miRNAs (pre-miRNAs) to mature miRNAs and then load them onto AGO2. Note that the trimeric RLC/miRLC is also referred to as RISC. Mg(2+) serves as cofactor. Requires Mn(2+) as cofactor.

The protein resides in the cytoplasm. The enzyme catalyses Endonucleolytic cleavage to 5'-phosphomonoester.. Double-stranded RNA (dsRNA) endoribonuclease playing a central role in short dsRNA-mediated post-transcriptional gene silencing. Cleaves naturally occurring long dsRNAs and short hairpin pre-microRNAs (miRNA) into fragments of twenty-one to twenty-three nucleotides with 3' overhang of two nucleotides, producing respectively short interfering RNAs (siRNA) and mature microRNAs. SiRNAs and miRNAs serve as guide to direct the RNA-induced silencing complex (RISC) to complementary RNAs to degrade them or prevent their translation. Gene silencing mediated by siRNAs, also called RNA interference, controls the elimination of transcripts from mobile and repetitive DNA elements of the genome but also the degradation of exogenous RNA of viral origin for instance. The miRNA pathway on the other side is a mean to specifically regulate the expression of target genes. This is Endoribonuclease Dicer (DICER1) from Gallus gallus (Chicken).